Here is a 205-residue protein sequence, read N- to C-terminus: uncharacterized protein (205 aa).

The next 4 helical transmembrane spans lie at 18–38 (ATVN…GTIG), 69–89 (LGIF…CFYA), 106–126 (VVWI…YYIM), and 127–147 (LLHP…LFLI).

It localises to the mitochondrion membrane. This is an uncharacterized protein from Arabidopsis thaliana (Mouse-ear cress).